The following is a 417-amino-acid chain: Phosphoglycerate kinase 2 (417 aa).

Residue serine 2 is modified to N-acetylserine. Serine 2 and serine 4 each carry phosphoserine. Residue lysine 11 is modified to N6-acetyllysine. (2R)-3-phosphoglycerate contacts are provided by valine 23, aspartate 24, phenylalanine 25, asparagine 26, glutamine 38, and arginine 39. Position 48 is an N6-acetyllysine (lysine 48). (2R)-3-phosphoglycerate is bound by residues serine 62, histidine 63, glycine 65, and arginine 66. Lysine 75, lysine 86, and lysine 97 each carry N6-acetyllysine. Residues leucine 122 and arginine 123 each coordinate (2R)-3-phosphoglycerate. Residues lysine 131 and lysine 146 each carry the N6-acetyllysine modification. (2R)-3-phosphoglycerate-binding residues include histidine 170 and arginine 171. Residue tyrosine 196 is modified to Phosphotyrosine. Residue lysine 199 is modified to N6-acetyllysine. An ADP-binding site is contributed by glycine 214. Glycine 214 is a CDP binding site. AMP-binding residues include alanine 215 and lysine 216. Alanine 215 is an ATP binding site. Mg(2+) is bound at residue alanine 215. Residues alanine 218 and aspartate 219 each coordinate Mg(2+). Position 219 (aspartate 219) interacts with CDP. Lysine 220 contributes to the AMP binding site. Residue lysine 220 coordinates ATP. Residue glycine 238 coordinates ADP. CDP is bound at residue glycine 238. AMP is bound at residue glycine 239. Glycine 239 serves as a coordination point for ATP. Lysine 267 and lysine 291 each carry N6-acetyllysine. Glycine 313 serves as a coordination point for AMP. Glycine 313 serves as a coordination point for ATP. CDP is bound by residues glycine 338 and phenylalanine 343. Residue phenylalanine 343 participates in ADP binding. Glutamate 344 provides a ligand contact to AMP. ATP contacts are provided by glutamate 344, aspartate 375, and threonine 376. Aspartate 375 contributes to the Mg(2+) binding site.

The protein belongs to the phosphoglycerate kinase family. In terms of assembly, monomer. It depends on Mg(2+) as a cofactor. In terms of tissue distribution, mainly found in round spermatids. Localized on the principle piece in the sperm (at protein level). Testis-specific. Expression significantly decreased in the testis of elderly men.

The protein localises to the cytoplasm. It carries out the reaction (2R)-3-phosphoglycerate + ATP = (2R)-3-phospho-glyceroyl phosphate + ADP. Its pathway is carbohydrate degradation; glycolysis; pyruvate from D-glyceraldehyde 3-phosphate: step 2/5. In terms of biological role, essential for sperm motility and male fertility. Not required for the completion of spermatogenesis. The sequence is that of Phosphoglycerate kinase 2 (PGK2) from Homo sapiens (Human).